Consider the following 62-residue polypeptide: Small ribosomal subunit protein bS21 (62 aa).

Basic and acidic residues predominate over residues 40–52; the sequence is KPSVKRKLKSEAA. The segment at 40–62 is disordered; it reads KPSVKRKLKSEAARKRKNKRRRY. Residues 53–62 show a composition bias toward basic residues; sequence RKRKNKRRRY.

Belongs to the bacterial ribosomal protein bS21 family.

This Limosilactobacillus fermentum (strain NBRC 3956 / LMG 18251) (Lactobacillus fermentum) protein is Small ribosomal subunit protein bS21.